Reading from the N-terminus, the 372-residue chain is Adaptive-response sensory-kinase SasA (372 aa).

The Histidine kinase domain maps to 147–360; it reads MVAHELRTPL…CFHFTVPVWQ (214 aa). H150 is modified (phosphohistidine; by autocatalysis).

Homooligomerizes. Interacts with KaiC. Participates in the KaiBC complex, whose core is composed of a KaiC homohexamer and 6 KaiB.

It catalyses the reaction ATP + protein L-histidine = ADP + protein N-phospho-L-histidine.. In terms of biological role, member of the two-component regulatory system SasA/RpaA involved in genome-wide circadian gene expression. One of several clock output pathways. Participates in the Kai clock protein complex, the main circadian regulator in cyanobacteria, via its interaction with KaiC. KaiC enhances the autophosphorylation activity of SasA, which then transfers its phosphate group to RpaA to activate it. In addition to its output function, recruits fold-shifted KaiB (KaiB(fs)) to KaiC to cooperatively form the KaiB(6):KaiC(6) complex (independent of SasA kinase activity). Required for robustness of the circadian rhythm of gene expression and is involved in clock output, also required for adaptation to light/dark cycles. This chain is Adaptive-response sensory-kinase SasA, found in Prochlorococcus marinus subsp. pastoris (strain CCMP1986 / NIES-2087 / MED4).